We begin with the raw amino-acid sequence, 133 residues long: Transcription antitermination protein NusB (133 aa).

This sequence belongs to the NusB family.

Its function is as follows. Involved in transcription antitermination. Required for transcription of ribosomal RNA (rRNA) genes. Binds specifically to the boxA antiterminator sequence of the ribosomal RNA (rrn) operons. This chain is Transcription antitermination protein NusB, found in Shouchella clausii (strain KSM-K16) (Alkalihalobacillus clausii).